The chain runs to 362 residues: Caveolae-associated protein 4 (362 aa).

Residues 1 to 24 (MEHNGSASNAGKIHQNRLSSVTED) form a disordered region. The stretch at 100–120 (IKDVKARVEKQQVRVTKVETK) forms a coiled coil. Residues Ser152, Ser171, and Ser172 each carry the phosphoserine modification. Basic and acidic residues-rich tracts occupy residues 230–255 (RERLRQSGERLRQSGERLRQSGERFK), 275–289 (KAKDPKAEGQEVDRG), and 305–320 (HEFHSDEFSETEKEVT). Disordered stretches follow at residues 230-289 (RERL…VDRG) and 305-346 (HEFH…KPQV). Tyr324 carries the phosphotyrosine modification. Thr334 is modified (phosphothreonine). The residue at position 353 (Ser353) is a Phosphoserine.

It belongs to the CAVIN family. In terms of assembly, component of the CAVIN complex composed of CAVIN1, CAVIN2, CAVIN3 and CAVIN4. Interacts with CAVIN1. Interacts with CAVIN2; this augments the transactivation of NPPA. Interacts with CAV3, ADRA1A, ADRA1B, MAPK1 and MAPK3. Abundantly expressed in cardiac and skeletal muscle (at protein level). Weaker expression in aorta and lung. In heart, expressed in cardiomyocytes and vascular smooth muscle cells but not in other surrounding cells including vascular endothelial cells.

It localises to the cytoplasm. The protein resides in the myofibril. It is found in the sarcomere. Its subcellular location is the cytosol. The protein localises to the membrane. It localises to the caveola. The protein resides in the cell membrane. It is found in the sarcolemma. Modulates the morphology of formed caveolae in cardiomyocytes, but is not required for caveolar formation. Facilitates the recruitment of MAPK1/3 to caveolae within cardiomyocytes and regulates alpha-1 adrenergic receptor-induced hypertrophic responses in cardiomyocytes through MAPK1/3 activation. Contributes to proper membrane localization and stabilization of caveolin-3 (CAV3) in cardiomyocytes. Induces RHOA activation and activates NPPA transcription and myofibrillar organization through the Rho/ROCK signaling pathway. The protein is Caveolae-associated protein 4 (Cavin4) of Mus musculus (Mouse).